Consider the following 1387-residue polypeptide: Kinesin-like protein KIF15-B (1387 aa).

Residues 26 to 364 form the Kinesin motor domain; that stretch reads AIKVFVRIRP…LQFAQRAKLI (339 aa). Residue 110-117 participates in ATP binding; it reads GQTGSGKT. The stretch at 369–1383 forms a coiled coil; sequence VVNEDTQGNV…NLFLKETKKC (1015 aa). The segment at 1138-1387 is necessary for its targeting to microtubule minus ends; that stretch reads NSPVVLAQTP…KETKKCEHCD (250 aa).

The protein belongs to the TRAFAC class myosin-kinesin ATPase superfamily. Kinesin family. KLP2 subfamily. Homodimer. Dimerization is required for targeting to microtubule minus ends. Found in a complex with tpx2 and microtubules. Its association with microtubules and targeting to microtubule minus ends requires tpx2. As to expression, strongly expressed in testis and weakly in lung (at protein level).

It localises to the cytoplasm. The protein resides in the cytoskeleton. Its subcellular location is the microtubule organizing center. It is found in the centrosome. The protein localises to the spindle. It localises to the spindle pole. Plus-end directed kinesin-like motor enzyme involved in mitotic spindle assembly. Required for centrosome separation and maintenance of spindle bipolarity during mitosis. The protein is Kinesin-like protein KIF15-B (kif15-b) of Xenopus laevis (African clawed frog).